The primary structure comprises 389 residues: Chalcone synthase (389 aa).

The active site involves Cys164.

Belongs to the thiolase-like superfamily. Chalcone/stilbene synthases family.

It catalyses the reaction (E)-4-coumaroyl-CoA + 3 malonyl-CoA + 3 H(+) = 2',4,4',6'-tetrahydroxychalcone + 3 CO2 + 4 CoA. The protein operates within secondary metabolite biosynthesis; flavonoid biosynthesis. Functionally, the primary product of this enzyme is 4,2',4',6'-tetrahydroxychalcone (also termed naringenin-chalcone or chalcone) which can under specific conditions spontaneously isomerize into naringenin. In Pueraria montana var. lobata (Kudzu vine), this protein is Chalcone synthase (CHS).